A 542-amino-acid polypeptide reads, in one-letter code: Probable quinate permease (542 aa).

At 1–22 the chain is on the cytoplasmic side; the sequence is MSILALVEDRPTPKEVYNWKIY. The helical transmembrane segment at 23–43 threads the bilayer; the sequence is LLAAVASFTSCMIGYDSAFIG. The Extracellular portion of the chain corresponds to 44-74; it reads TTLALSSFREEFGFSTMSKTAVNLVSANIVS. Residues 75–95 traverse the membrane as a helical segment; sequence CYQAGAFFGAFFAYPIGHFWG. Residues 96–97 are Cytoplasmic-facing; sequence RK. A helical membrane pass occupies residues 98–118; sequence WGLLFAGTIFTLGAGLMLGAN. Residues 119–130 lie on the Extracellular side of the membrane; it reads GDRGLGLLYGGR. A helical transmembrane segment spans residues 131 to 151; that stretch reads VLAGLGVGAGSNITPIYISEM. Topologically, residues 152–159 are cytoplasmic; the sequence is APPSIRGR. Residues 160-180 form a helical membrane-spanning segment; that stretch reads LVGVYELGWQIGGLVGFWINY. Topologically, residues 181 to 193 are extracellular; it reads GVSETLAPSHKQW. The chain crosses the membrane as a helical span at residues 194–214; sequence IIPFAVQLIPSGLLLIGAVFL. The Cytoplasmic segment spans residues 215-285; it reads KESPRWLFSR…AGTNKKVMYR (71 aa). A helical transmembrane segment spans residues 286 to 306; the sequence is LFLGSMLFFWQNGSGINAINY. The Extracellular portion of the chain corresponds to 307-325; the sequence is YSPTVFKSIGLHGANTSMF. A helical transmembrane segment spans residues 326–346; sequence STGIFGVVKTVVTFVWLLYLI. The Cytoplasmic segment spans residues 347–352; it reads DRVGRR. A helical membrane pass occupies residues 353-373; the sequence is LLLLIGAAGAAVCLLIVGAYI. The Extracellular portion of the chain corresponds to 374-387; sequence KIADPASNPTQEMT. Residues 388–408 traverse the membrane as a helical segment; the sequence is GGGIAAMFFFYLYTVFYTPSW. Residues 409–456 lie on the Cytoplasmic side of the membrane; sequence NGTPWVMNSEMFEPNMRSLAQACAAASNWLWNFLISRFTPQMFAKMEY. The chain crosses the membrane as a helical span at residues 457–477; the sequence is GVWFFFASLMLLSIVFVFFLV. Topologically, residues 478–542 are extracellular; the sequence is PETKGIPLES…EHVSEDLPKV (65 aa). Residues 523–542 are disordered; the sequence is GYSKTGEQQVEHVSEDLPKV. Residues 531-542 show a composition bias toward basic and acidic residues; that stretch reads QVEHVSEDLPKV.

It belongs to the major facilitator superfamily. Sugar transporter (TC 2.A.1.1) family. As to quaternary structure, interacts with creB. Ubiquitinated. Deubiquitinated by creB, probably to control its activity or amount.

The protein localises to the cell membrane. Its function is as follows. Integral membrane transporter that imports quinic acid to be catabolized as a carbon source. This is Probable quinate permease (qutD) from Aspergillus fumigatus (strain ATCC MYA-4609 / CBS 101355 / FGSC A1100 / Af293) (Neosartorya fumigata).